Consider the following 505-residue polypeptide: Outer capsid protein VP5 (505 aa).

Residues Met1–Glu42 form an involved in membrane permeabilization region.

It belongs to the orbivirus VP5 family.

The protein localises to the virion. VP5 protein is one of the two proteins (with VP2) which constitute the virus particle outer capsid. Acts as a membrane permeabilization protein that mediates release of viral particles from endosomal compartments into the cytoplasm. Permeabilization activity is probably negatively regulated by VP2 and is triggered by endosomal degradation of VP2 and exposure to low pH. The polypeptide is Outer capsid protein VP5 (Segment-6) (African horse sickness virus (AHSV)).